We begin with the raw amino-acid sequence, 112 residues long: Tyrosine-protein phosphatase 7 (112 aa).

Positions 1-112 constitute a Tyrosine-protein phosphatase domain; that stretch reads NNVTIIVMIT…SSPESGPIVV (112 aa). Aspartate 82 lines the substrate pocket.

The protein belongs to the protein-tyrosine phosphatase family.

The catalysed reaction is O-phospho-L-tyrosyl-[protein] + H2O = L-tyrosyl-[protein] + phosphate. The protein is Tyrosine-protein phosphatase 7 (STY-7) of Styela plicata (Wrinkled sea squirt).